The primary structure comprises 136 residues: Urease subunit beta (136 aa).

The disordered stretch occupies residues 112-136; it reads ENDEYAGVFGDNGTENVNKKGGKRS.

The protein belongs to the urease beta subunit family. Heterotrimer of UreA (gamma), UreB (beta) and UreC (alpha) subunits. Three heterotrimers associate to form the active enzyme.

It localises to the cytoplasm. It catalyses the reaction urea + 2 H2O + H(+) = hydrogencarbonate + 2 NH4(+). Its pathway is nitrogen metabolism; urea degradation; CO(2) and NH(3) from urea (urease route): step 1/1. This Staphylococcus aureus (strain MRSA252) protein is Urease subunit beta.